A 116-amino-acid chain; its full sequence is U16-barytoxin-Tl1b (116 aa).

A signal peptide spans 1–20 (MKTIIVFLSLLVLATKFGDA). The propeptide occupies 21-74 (KEGVNQKQKKEVTQNEFREEYLNEMAAMSLVQQLEAIERALFENEAGRNSRQKR). Disulfide bonds link cysteine 75–cysteine 90, cysteine 82–cysteine 95, and cysteine 89–cysteine 110.

The protein belongs to the neurotoxin 14 (magi-1) family. 06 (ICK-Trit) subfamily. Expressed by the venom gland.

It localises to the secreted. Ion channel inhibitor. The polypeptide is U16-barytoxin-Tl1b (Trittame loki (Brush-footed trapdoor spider)).